Reading from the N-terminus, the 784-residue chain is Ribosome biogenesis protein BOP1 homolog (784 aa).

A compositionally biased stretch (basic residues) spans 1 to 11 (MTKKLALKRKG). A disordered region spans residues 1–159 (MTKKLALKRK…DSDTSDEEDI (159 aa)). 4 stretches are compositionally biased toward acidic residues: residues 27-36 (SENEEEEEDL), 45-54 (EDSTDDEGID), 62-73 (SEELQFESDEEG), and 84-111 (AEED…EDEE). Residues 112 to 123 (KDSKLKQSDDKP) are compositionally biased toward basic and acidic residues. Residues 124–133 (SSSGAASKKA) show a composition bias toward low complexity. Positions 138–148 (LSKRDTSKPEY) are enriched in basic and acidic residues. The span at 149–158 (QDSDTSDEED) shows a compositional bias: acidic residues. 7 WD repeats span residues 445 to 486 (GHTD…RTIE), 488 to 526 (DEVV…KVLV), 570 to 612 (THFK…SQIP), 615 to 653 (KSKG…LVKK), 656 to 695 (TNSK…KPYQ), 699 to 738 (LHRN…DLLQ), and 754 to 784 (RDEF…RLYT).

Belongs to the WD repeat BOP1/ERB1 family.

It is found in the nucleus. Its subcellular location is the nucleolus. The protein localises to the nucleoplasm. Its function is as follows. Required for maturation of ribosomal RNAs and formation of the large ribosomal subunit. The sequence is that of Ribosome biogenesis protein BOP1 homolog from Drosophila erecta (Fruit fly).